We begin with the raw amino-acid sequence, 7096 residues long: Replicase polyprotein 1ab (7096 aa).

A disordered region spans residues 1-147 (MESLVPGFNE…ADLKSFDLGD (147 aa)). The Cytoplasmic segment spans residues 1-2225 (MESLVPGFNE…NYLKSPNFSK (2225 aa)). The 116-residue stretch at 12-127 (THVQLSLPVL…YRKVLLRKNG (116 aa)) folds into the CoV Nsp1 globular domain. One can recognise a BetaCoV Nsp1 C-terminal domain in the interval 148–179 (ELGTDPYEDFQENWNTKHSSGVTRELMRELNG). A binding to 40s ribosome mRNA entry channel region spans residues 154–180 (YEDFQENWNTKHSSGVTRELMRELNGG). The CoV Nsp2 N-terminal domain occupies 183–456 (TRYVDNNFCG…NDNLLEILQK (274 aa)). Zn(2+) contacts are provided by C200, C231, H234, H236, C323, C326, C341, C344, C370, C373, H382, and C416. Positions 200–236 (CIKDLLARAGKASCTLSEQLDFIDTKRGVYCCREHEH) are C2H2. The C4 stretch occupies residues 323-344 (CDHCGETSWQTGDFVKATCEFC). The interval 370 to 416 (CPACHNSEVGPEHSLAEYHNESGLKTILRKGGRTIAFGGCVFSYVGC) is C2HC. The CoV Nsp2 middle domain occupies 458 to 688 (KVNINIVGDF…FKLVNKFLAL (231 aa)). 2 LRR repeats span residues 545–569 (RSIFSRTLETAQNSVRVLQKAAITI) and 697–719 (GAKLKALNLGETFVTHSKGLYRK). The CoV Nsp2 C-terminal domain occupies 690–818 (ADSIIIGGAK…TNNTFTLKGG (129 aa)). The Ubiquitin-like 1 domain maps to 821 to 929 (TKVTFGDDTV…MYCSFYPPDE (109 aa)). The tract at residues 926-999 (PPDEDEEEGD…QQDGSEDNQT (74 aa)) is disordered. Composition is skewed to acidic residues over residues 927 to 942 (PDEDEEEGDCEEEEFE) and 971 to 984 (PEEEQEEDWLDDDS). 3 consecutive Macro domains span residues 1025–1194 (VNSF…LEMK), 1231–1359 (KIKA…LPSI), and 1367–1494 (ILGT…TSSS). Positions 1496–1561 (TPEEHFIETI…TFDNLKTLLS (66 aa)) constitute a DPUP domain. The Ubiquitin-like 2 domain maps to 1565–1620 (VRTIKVFTTVDNINLHTQVVDMSMTYGQQFGPTYLDGADVTKIKPHNSHEGKTFYV). Residues 1634–1898 (YYHTTDPSFL…CTEIDPKLDN (265 aa)) form the Peptidase C16 domain. The active-site For PL-PRO activity is C1674. One copy of the LRR 3 repeat lies at 1680–1702 (LLTLQQIELKFNPPALQDAYYRA). Zn(2+) contacts are provided by C1752, C1755, C1787, and C1789. Residues 1752 to 1789 (CKTCGQQQTTLKGVEAVMYMGTLSYEQFKKGVQIPCTC) form a C4-type zinc finger. Catalysis depends on for PL-PRO activity residues H1835 and D1849. Residues 1911–2021 (PIDLVPNQPY…CLWSTKPVET (111 aa)) enclose the Nucleic acid-binding domain. In terms of domain architecture, G2M spans 2046 to 2155 (PVSEEVVENP…LNKVVSTTTN (110 aa)). Residues 2226–2246 (LINIIIWFLLLSVCLGSLIYS) traverse the membrane as a helical segment. Topologically, residues 2247–2317 (TAALGVLMSN…QITISSFKWD (71 aa)) are lumenal. The 3Ecto domain maps to 2247-2317 (TAALGVLMSN…QITISSFKWD (71 aa)). Disulfide bonds link C2263-C2291 and C2282-C2288. Residues 2318 to 2338 (LTAFGLVAEWFLAYILFTRFF) form a helical membrane-spanning segment. The Cytoplasmic segment spans residues 2339-2775 (YVLGLAAIMQ…VNNWLKQLIK (437 aa)). A Y1 region spans residues 2395–2485 (KSYVHVVDGC…QFKRPINPTD (91 aa)). Residues 2395–2763 (KSYVHVVDGC…VTTKIALKGG (369 aa)) enclose the CoV Nsp3 Y domain. H2399, C2404, C2409, C2412, C2445, H2448, C2452, and C2455 together coordinate Zn(2+). Positions 2399 to 2412 (HVVDGCNSSTCMMC) are ZF1. The segment at 2445–2455 (CKLHNWNCVNC) is ZF2. Residues 2486–2580 (QSSYIVDSVT…LLDQALVSDV (95 aa)) are Y2. Residues 2486 to 2763 (QSSYIVDSVT…VTTKIALKGG (278 aa)) form a coV-Y region. Residues 2581–2662 (GDSAEVAVKM…ECLKLSHQSD (82 aa)) are Y3. The tract at residues 2663 to 2763 (IEVTGDSCNN…VTTKIALKGG (101 aa)) is Y4. The helical transmembrane segment at 2776–2796 (VTLVFLFVAAIFYLITPVHVM) threads the bilayer. Residues 2797-3044 (SKHTDFSSEI…IQPIGALDIS (248 aa)) lie on the Lumenal side of the membrane. A helical membrane pass occupies residues 3045–3065 (ASIVAGGIVAIVVTCLAYYFM). At 3066–3099 (RFRRAFGEYSHVVAFNTLLFLMSFTVLCLTPVYS) the chain is on the cytoplasmic side. Residues 3100–3120 (FLPGVYSVIYLYLTFYLTNDV) form a helical membrane-spanning segment. The Lumenal segment spans residues 3121-3127 (SFLAHIQ). The helical transmembrane segment at 3128–3148 (WMVMFTPLVPFWITIAYIICI) threads the bilayer. Residues 3149 to 3586 (STKHFYWFFS…KGTHHWLLLT (438 aa)) lie on the Cytoplasmic side of the membrane. Residues 3165–3263 (VVFNGVSFST…QTSITSAVLQ (99 aa)) enclose the Nsp4C domain. The stretch at 3185–3206 (LNKEMYLKLRSDVLLPLTQYNR) is one LRR 4 repeat. One can recognise a Peptidase C30 domain in the interval 3264–3569 (SGFRKMAFPS…VRQCSGVTFQ (306 aa)). Residue K3268 forms a Glycyl lysine isopeptide (Lys-Gly) (interchain with G-Cter in ubiquitin) linkage. H3304 functions as the For 3CL-PRO activity in the catalytic mechanism. K3353 participates in a covalent cross-link: Glycyl lysine isopeptide (Lys-Gly) (interchain with G-Cter in ubiquitin). The active-site Nucleophile; for 3CL-PRO activity is the C3408. A helical membrane pass occupies residues 3587-3607 (ILTSLLVLVQSTQWSLFFFLY). E3608 is a topological domain (lumenal). A helical transmembrane segment spans residues 3609 to 3629 (NAFLPFAMGIIAMSAFAMMFV). The Cytoplasmic segment spans residues 3630 to 3634 (KHKHA). The chain crosses the membrane as a helical span at residues 3635-3655 (FLCLFLLPSLATVAYFNMVYM). Topologically, residues 3656 to 3673 (PASWVMRIMTWLDMVDTS) are lumenal. The chain crosses the membrane as a helical span at residues 3674 to 3694 (LSGFKLKDCVMYASAVVLLIL). Residues 3695-3729 (MTARTVYDDGARRVWTLMNVLTLVYKVYYGNALDQ) lie on the Cytoplasmic side of the membrane. A helical transmembrane segment spans residues 3730–3750 (AISMWALIISVTSNYSGVVTT). Residues 3751–3778 (VMFLARGIVFMCVEYCPIFFITGNTLQC) lie on the Lumenal side of the membrane. The chain crosses the membrane as a helical span at residues 3779 to 3799 (IMLVYCFLGYFCTCYFGLFCL). The Cytoplasmic portion of the chain corresponds to 3800–7096 (LNRYFRLTLG…VISSDVLVNN (3297 aa)). Residues 3860–3942 (SKMSDVKCTS…EMLDNRATLQ (83 aa)) form the RdRp Nsp7 cofactor domain. The interval 3931–4020 (CEEMLDNRAT…QMYKQARSED (90 aa)) is disordered. LRR repeat units lie at residues 3935-3959 (LDNRATLQAIASEFSSLPSYAAFAT) and 3977-4004 (LKKLKKSLNVAKSEFDRDAAMQRKLEKM). Residues 3943–4140 (AIASEFSSLP…LRANSAVKLQ (198 aa)) form the RdRp Nsp8 cofactor domain. In terms of domain architecture, Nsp9 ssRNA-binding spans 4141-4253 (NNELSPVALR…GSLAATVRLQ (113 aa)). One can recognise an ExoN/MTase coactivator domain in the interval 4254–4392 (AGNATEVPAN…CDQLREPMLQ (139 aa)). 8 residues coordinate Zn(2+): C4327, C4330, H4336, C4343, C4370, C4373, C4381, and C4383. Positions 4399 to 4653 (FLNRVCGVSA…TAESHVDTDL (255 aa)) constitute a NiRAN domain. Residues 4591 to 4616 (AGIVGVLTLDNQDLNGNWYDFGDFIQ) form an LRR 7 repeat. Mn(2+) contacts are provided by N4601 and D4610. The 99-residue stretch at 4658-4756 (IKWDLLKYDF…HNQDVNLHSS (99 aa)) folds into the Nsp12 Interface domain. Zn(2+) contacts are provided by H4687, C4693, C4698, C4702, and C4879. Residues 4757–5324 (RLSFKELLVY…AMYTPHTVLQ (568 aa)) enclose the Nsp12 RNA-dependent RNA polymerase domain. Residues 4759 to 4973 (SFKELLVYAA…HQKLLKSIAA (215 aa)) form a rdRp Fingers N-ter region. Residues 4937-4947 (KYAISAKNRAR) are interaction with RMP Remdesivir. Residues 4974–5012 (TRGATVVIGTSKFYGGWHNMLKTVYSDVENPHLMGWDYP) form a rdRp Palm N-ter region. The region spanning 5004-5166 (PHLMGWDYPK…CFNSTYASQG (163 aa)) is the RdRp catalytic domain. Positions 5013–5071 (KCDRAMPNMLRIMASLVLARKHTTCCSLSHRFYRLANECAQVLSEMVMCGGSLYVKPGG) are rdRp Fingers C-ter. Residues H5034, C5037, and C5038 each coordinate Zn(2+). Residues 5072-5207 (TSSGDATTAY…TKGPHEFCSQ (136 aa)) form a rdRp Palm C-ter region. Active-site residues include S5151, D5152, and D5153. The segment at 5208-5324 (HTMLVKQGDD…AMYTPHTVLQ (117 aa)) is rdRp Thumb. Residues 5325–5437 (AVGACVLCNS…TDFNAIATCD (113 aa)) form the CV ZBD domain. The Zn(2+) site is built by C5329, C5332, C5340, C5343, C5350, C5353, H5357, H5363, C5374, C5379, C5396, and H5399. The stretch at 5552-5572 (TSHTVMPLSAPTLVPQEHYVR) is one LRR 8 repeat. One can recognise a (+)RNA virus helicase ATP-binding domain in the interval 5581-5762 (NISDEFSSNV…MKTIGPDMFL (182 aa)). Position 5606–5613 (5606–5613 (GPPGTGKS)) interacts with a ribonucleoside 5'-triphosphate. The (+)RNA virus helicase C-terminal domain maps to 5763 to 5932 (GTCRRCPAEI…TLQAENVTGL (170 aa)). The 216-residue stretch at 5997–6212 (MFITREEAIR…RCLAVHECFV (216 aa)) folds into the ExoN domain. Residues D6015, E6017, and E6116 contribute to the active site. Mg(2+) is bound by residues D6015, E6017, and E6116. 7 residues coordinate Zn(2+): C6132, C6135, C6151, H6154, H6182, C6186, and H6189. Active-site residues include H6193 and D6198. Positions 6193 and 6198 each coordinate Mg(2+). C6204 contributes to the Zn(2+) binding site. The 232-residue stretch at 6221 to 6452 (YPIIGDELKI…NLWNTFTRLQ (232 aa)) folds into the N7-MTase domain. 6256–6262 (DIGNPKA) contributes to the S-adenosyl-L-methionine binding site. Positions 6339-6353 (CDGGSLYVNKHAFHT) are gpppA-binding. The Zn(2+) site is built by C6377, C6402, C6409, and H6412. The 61-residue stretch at 6453–6513 (SLENVAFNVV…NVAFELWAKR (61 aa)) folds into the Nsp15 N-terminal oligomerization domain. The region spanning 6514 to 6639 (NIKPVPEVKI…YYKKVDGVVQ (126 aa)) is the AV-Nsp11N/CoV-Nsp15M domain. The NendoU domain occupies 6656-6795 (KPRSQMEIDF…KDGHVETFYP (140 aa)). H6686 acts as the Proton donor; for uridylate-specific endoribonuclease nsp15 activity in catalysis. The Proton acceptor; for uridylate-specific endoribonuclease nsp15 activity role is filled by H6701. Catalysis depends on K6741, which acts as the For uridylate-specific endoribonuclease nsp15 activity. Uracil contacts are provided by residues 6741–6745 (KCVCS) and 6792–6796 (TFYPK). The Nidovirus-type SAM-dependent 2'-O-MTase domain maps to 6800–7094 (SQAWQPGVAM…RVVISSDVLV (295 aa)). The LRR 9 repeat unit spans residues 6817–6841 (RMLLEKCDLQNYGDSATLPKGIMMN). Catalysis depends on residues K6844, D6928, K6968, and E7001.

It belongs to the coronaviruses polyprotein 1ab family. As to quaternary structure, interacts with host GIGYF2. In terms of assembly, may form homohexamers. Interacts with N protein. 3CL-PRO exists as monomer and homodimer. Only the homodimer shows catalytic activity. Interacts with host FBXO22; this interaction promotes the proteasomal degradation of nsp5. As to quaternary structure, interacts with PL-PRO and nsp6. In terms of assembly, forms homodimers. Interacts with host ZFYVE1 (DFCP1), which leads to ER and DMVs binding to lipid droplets. Interacts with host TBK1; this interaction decreases IRF3 phosphorylation by 57%, which leads to reduced IFN-beta production. Interacts with nsp8 and nsp12 to form the replication-transcription complex (RTC): nsp12, nsp7, two subunits of nsp8, and up to two subunits of nsp13. Eight copies of nsp7 and eight copies of nsp8 assemble to form a heterohexadecamer dsRNA-encircling ring structure. As to quaternary structure, interacts with nsp7, nsp13 and nsp12 to form the replication-transcription complex (RTC): nsp12, nsp7, two subunits of nsp8, and up to two subunits of nsp13. Eight copies of nsp7 and eight copies of nsp8 assemble to form a heterohexadecamer dsRNA-encircling ring structure. In terms of assembly, is a dimer. Interacts with NSP12. Interacts with host SND1. Forms a dodecamer and interacts with nsp14 and nsp16; these interactions enhance nsp14 and nsp16 enzymatic activities. As to quaternary structure, interacts with nsp7 and nsp8 to form the replication-transcription complex (RTC): nsp12, nsp7, two subunits of nsp8, and up to two subunits of nsp13. Interacts with nsp9. In terms of assembly, interacts with nsp8 to form the replication-transcription complex (RTC): nsp12, nsp7, two subunits of nsp8, and up to two subunits of nsp13. Interacts with host TBK1; this interaction inhibits TBK1 phosphorylation and decreases by 75% IRF3 phosphorylation, which leads to reduced IFN-beta production. Interacts (via N-terminus) with DDX1. Interacts with nsp10. As to quaternary structure, homohexamer. In terms of assembly, interacts with nsp10. Mn(2+) serves as cofactor. Requires Mg(2+) as cofactor. Specific enzymatic cleavages in vivo by its own proteases yield mature proteins. 3CL-PRO and PL-PRO proteinases are autocatalytically processed.

The protein localises to the host cytoplasm. The protein resides in the host endosome. It is found in the host endoplasmic reticulum membrane. It localises to the host Golgi apparatus. Its subcellular location is the host nucleus. The protein localises to the host perinuclear region. The protein resides in the host endoplasmic reticulum. It is found in the host endoplasmic reticulum-Golgi intermediate compartment. It catalyses the reaction RNA(n) + a ribonucleoside 5'-triphosphate = RNA(n+1) + diphosphate. The enzyme catalyses ATP + H2O = ADP + phosphate + H(+). The catalysed reaction is TSAVLQ-|-SGFRK-NH2 and SGVTFQ-|-GKFKK the two peptides corresponding to the two self-cleavage sites of the SARS 3C-like proteinase are the two most reactive peptide substrates. The enzyme exhibits a strong preference for substrates containing Gln at P1 position and Leu at P2 position.. It carries out the reaction Thiol-dependent hydrolysis of ester, thioester, amide, peptide and isopeptide bonds formed by the C-terminal Gly of ubiquitin (a 76-residue protein attached to proteins as an intracellular targeting signal).. It catalyses the reaction a 5'-end (N(7)-methyl 5'-triphosphoguanosine)-ribonucleoside in mRNA + S-adenosyl-L-methionine = a 5'-end (N(7)-methyl 5'-triphosphoguanosine)-(2'-O-methyl-ribonucleoside) in mRNA + S-adenosyl-L-homocysteine + H(+). The enzyme catalyses uridylyl-uridylyl-ribonucleotide-RNA = a 3'-end uridylyl-2',3'-cyclophospho-uridine-RNA + a 5'-end dephospho-ribonucleoside-RNA. The catalysed reaction is a 5'-end diphospho-ribonucleoside in mRNA + GTP + H(+) = a 5'-end (5'-triphosphoguanosine)-ribonucleoside in mRNA + diphosphate. It carries out the reaction a 5'-end (5'-triphosphoguanosine)-ribonucleoside in mRNA + S-adenosyl-L-methionine = a 5'-end (N(7)-methyl 5'-triphosphoguanosine)-ribonucleoside in mRNA + S-adenosyl-L-homocysteine. Its activity is regulated as follows. Inhibited in vitro by GRL-0617. With respect to regulation, inhibited ex vivo by K22. It may shift NSP6 zippering activity towards the nuclear envelope, thereby impairing formation of the NSP6-compartment necessary for viral transcription/replication. Inhibited by Remdesivir antiviral drug (GS-5734). Its activity is regulated as follows. Inhibited by Remdesivir antiviral drug (GS-5734) through non-obligate RNA chain termination. With respect to regulation, inhibited by pyridone-containing alpha-ketoamides compounds 13a and 13b. In turn, alpha-ketoamide 13b (tert-butyl (1-((S)-1-(((S)-4-(benzylamino)-3,4-dioxo-1-((S)-2-oxopyrrolidin-3-yl)butan-2-yl)amino)-3-cyclopropyl-1-oxopropan-2-yl)-2-oxo-1,2-dihydropyridin-3-yl)carbamate) inhibits SARS-CoV-2 replication in human lung cells. Inhibited ex vivo by michael acceptor inhibitor N3. Inhibited ex vivo by compound 11a and 11b. Functionally, multifunctional protein involved in the transcription and replication of viral RNAs. Contains the proteinases responsible for the cleavages of the polyprotein. Inhibits host translation by associating with the open head conformation of the 40S subunit. The C-terminus binds to and obstructs ribosomal mRNA entry tunnel. Thereby inhibits antiviral response triggered by innate immunity or interferons. The nsp1-40S ribosome complex further induces an endonucleolytic cleavage near the 5'UTR of host mRNAs, targeting them for degradation. This inhibits the integrated stress response (ISR) in the infected cell by preventing EIF2S1/eIF2-alpha phosphorylation upstream of stress granule formation and depletes host G3BP1. Viral mRNAs less susceptible to nsp1-mediated inhibition of translation, because of their 5'-end leader sequence. Its function is as follows. Enhances mRNA repression of the 4EHP-GYF2 complex in the host, thereby inhibiting the antiviral response and facilitating SARS-CoV-2 replication. Possibly acts in cooperation with nsp1, which induces ribosome stalling on host mRNA, triggering mRNA repression by the host 4EHP-GYF2 complex which is enhanced by nsp2. In terms of biological role, responsible for the cleavages located at the N-terminus of the replicase polyprotein. Participates together with nsp4 in the assembly of virally-induced cytoplasmic double-membrane vesicles necessary for viral replication. Antagonizes innate immune induction of type I interferon by blocking the phosphorylation, dimerization and subsequent nuclear translocation of host IRF3. Also prevents host NF-kappa-B signaling. In addition, PL-PRO possesses a deubiquitinating/deISGylating activity and processes both 'Lys-48'- and 'Lys-63'-linked polyubiquitin chains from cellular substrates. Cleaves preferentially ISG15 from antiviral protein IFIH1 (MDA5), but not RIGI. Can play a role in host ADP-ribosylation by ADP-ribose. Plays a role in the formation and maintenance of double membrane vesicles (DMVs) replication organelles. DMVs are formed by nsp3 and nsp4, while nsp6 zippers ER membranes and connects to lipid droplets. Functionally, plays a role in the formation and maintenance of double membrane vesicles (DMVs) replication organelles. DMVs are formed by nsp3 and nsp4, while nsp6 zippers ER membranes and connects to lipid droplets. Cleaves the C-terminus of replicase polyprotein at 11 sites. Recognizes substrates containing the core sequence [ILMVF]-Q-|-[SGACN]. Cleaves and inactivates human TRMT1, preventing tRNA guanine(26)-dimethylation of tRNAs. May cleave human NLRP1 in lung epithelial cells, thereby activating the NLRP1 inflammasome pathway. May cleave human GSDMD, triggering alternative GSDME-mediated epithelial cell death upon activation of the NLRP1 inflammasome, which may enhance the release interleukins 1B, 6, 16 and 18. Also able to bind an ADP-ribose-1''-phosphate (ADRP). Its function is as follows. Plays a role in the formation and maintenance of double membrane vesicles (DMVs) replication organelles. DMVs are formed by nsp3 and nsp4, while nsp6 zippers ER membranes and connects to lipid droplets. LDs are consumed during DMV formation. Binds to host TBK1 without affecting TBK1 phosphorylation; the interaction with TBK1 decreases IRF3 phosphorylation, which leads to reduced IFN-beta production. In terms of biological role, plays a role in viral RNA synthesis. Forms a hexadecamer with nsp8 (8 subunits of each) that may participate in viral replication by acting as a primase. Alternatively, may synthesize substantially longer products than oligonucleotide primers. Functionally, plays a role in viral RNA synthesis. Forms a hexadecamer with nsp7 (8 subunits of each) that may participate in viral replication by acting as a primase. Alternatively, may synthesize substantially longer products than oligonucleotide primers. Interacts with ribosome signal recognition particle RNA (SRP). Together with NSP9, suppress protein integration into the cell membrane, thereby disrupting host immune defenses. Forms a primer, NSP9-pU, which is utilized by the polymerase for the initiation of RNA chains. Interacts with ribosome signal recognition particle RNA (SRP). Together with NSP8, suppress protein integration into the cell membrane, thereby disrupting host immune defenses. Its function is as follows. Plays a pivotal role in viral transcription by stimulating both nsp14 3'-5' exoribonuclease and nsp16 2'-O-methyltransferase activities. Therefore plays an essential role in viral mRNAs cap methylation. In terms of biological role, RNA-directed RNA polymerase that catalyzes the transcription of viral genomic and subgenomic RNAs. Acts in complex with nsp7 and nsp8 to transcribe both the minus and positive strands of genomic RNA. The kinase-like NiRAN domain of NSP12 attaches one or more nucleotides to the amino terminus of NSP9, forming a covalent RNA-protein intermediate that serves as transcription/replication primer. Subgenomic RNAs (sgRNAs) are formed by discontinuous transcription: The polymerase has the ability to pause at transcription-regulating sequences (TRS) and jump to the leader TRS, resulting in a major deletion. This creates a series of subgenomic RNAs that are replicated, transcribed and translated. In addition, Nsp12 is a subunit of the viral RNA capping enzyme that catalyzes the RNA guanylyltransferase reaction for genomic and sub-genomic RNAs. Subsequently, the NiRAN domain transfers RNA to GDP, and forms the core cap structure GpppA-RNA. Functionally, plays a role in viral RNA synthesis. Multi-functional protein with a zinc-binding domain in N-terminus displaying RNA and DNA duplex-unwinding activities with 5' to 3' polarity. Activity of helicase is dependent on magnesium. Binds to host TBK1 and inhibits TBK1 phosphorylation; the interaction with TBK1 decreases IRF3 phosphorylation, which leads to reduced IFN-beta production. Plays a role in viral RNA synthesis through two distinct activities. The N7-guanine methyltransferase activity plays a role in the formation of the cap structure GpppA-RNA. The proofreading exoribonuclease reduces the sensitivity of the virus to RNA mutagens during replication. This activity acts on both ssRNA and dsRNA in a 3'-5' direction. Its function is as follows. Plays a role in viral transcription/replication and prevents the simultaneous activation of host cell dsRNA sensors, such as MDA5/IFIH1, OAS, and PKR. Acts by degrading the 5'-polyuridines generated during replication of the poly(A) region of viral genomic and subgenomic RNAs. Catalyzes a two-step reaction in which a 2'3'-cyclic phosphate (2'3'-cP) is first generated by 2'-O transesterification, which is then hydrolyzed to a 3'-phosphate (3'-P). If not degraded, poly(U) RNA would hybridize with poly(A) RNA tails and activate host dsRNA sensors. May bind genomic dsRNA in association with the replication-transcription complex (RTC), and play a role in nsp12 discontinous transcription. In terms of biological role, methyltransferase that mediates mRNA cap 2'-O-ribose methylation to the 5'-cap structure of viral mRNAs. N7-methyl guanosine cap is a prerequisite for binding of nsp16. Therefore, it plays an essential role in cap methylation of viral mRNAs, which is essential to evade the immune system, especially when restricted by human IFIT1 and IFIT3. May disrupt host mRNA splicing in nucleus by interacting with pre-mRNA Recognition Domains of the U1 and U2 snRNAs. The protein is Replicase polyprotein 1ab (rep) of Homo sapiens (Human).